The chain runs to 872 residues: Serine/threonine-protein phosphatase 1 regulatory subunit 10 (872 aa).

Positions 1 to 348 (MGSGPIDPKE…EPAAPAEPMD (348 aa)) are interaction with TOX4. In terms of domain architecture, TFIIS N-terminal spans 73–147 (KLLNSWLTYS…SDWMAVIRSQ (75 aa)). Disordered stretches follow at residues 147 to 213 (QSST…STGL), 247 to 270 (SATA…NTTP), 307 to 398 (KKKK…KRKT), and 534 to 837 (VETL…HGGD). Composition is skewed to basic and acidic residues over residues 153 to 166 (AEKD…EGKS) and 174 to 196 (PLTE…EKPK). A Glycyl lysine isopeptide (Lys-Gly) (interchain with G-Cter in SUMO2) cross-link involves residue K179. Residues 248 to 258 (ATAAPGDAAPP) are compositionally biased toward low complexity. K262 is covalently cross-linked (Glycyl lysine isopeptide (Lys-Gly) (interchain with G-Cter in SUMO2)). Residue S313 is modified to Phosphoserine. The span at 325–336 (KTSTEPSTAKPS) shows a compositional bias: low complexity. A necessary for interaction with PPP1CA region spans residues 357–433 (PAVEVPELMD…NKIKDFGEAA (77 aa)). S382 is modified (phosphoserine). The necessary for interaction with PPP1CC stretch occupies residues 393-408 (GRKRKTVTWPEEGKLR). Positions 394–423 (RKRKTVTWPEEGKLREYFYFELDETERVNV) match the PP1-binding motif motif. The residue at position 398 (T398) is a Phosphothreonine; by PKA. The interval 418–619 (TERVNVNKIK…LKQMLVPHGL (202 aa)) is interaction with WDR82. Gly residues predominate over residues 540-551 (GGSGGSPDGAGG). Phosphoserine is present on residues S545 and S591. Positions 583–595 (EILTSIMGSPNNH) are enriched in polar residues. Residues 596–611 (PSEELLKQPDYSDKLK) show a composition bias toward basic and acidic residues. Residues 644 to 655 (PPGPGGPMPGPH) show a composition bias toward pro residues. R665 is modified (omega-N-methylarginine). Residues 674–690 (RGGDPFWDGPGDPMRGG) show a composition bias toward low complexity. R693 and R737 each carry omega-N-methylarginine. Residues 724 to 762 (ARGGRSGGGPPNGRGGPGGGGMVGGGGHRPHEGPGGSMG) show a composition bias toward gly residues. Basic and acidic residues predominate over residues 795–835 (PHDVPSHRGHDHRGPPPHEHRGHDGHGGGGHRGHDGGHSHG). Residues 838-866 (MSNRPVCRHFMMKGNCRYENNCAFYHPGV) form a C3H1-type zinc finger.

As to quaternary structure, component of the PNUTS-PP1 complex (also named PTW/PP1 complex), composed of PPP1R10/PNUTS, TOX4, WDR82, and PPP1CA (or PPP1CB or PPP1CC). Post-translationally, phosphorylated on Thr-398 by PKA within the region necessary for interaction with PPP1CA. As to expression, expressed in testis, brain and intestine (at protein level). Highly expressed in testis.

The protein localises to the nucleus. Its subcellular location is the chromosome. Functionally, substrate-recognition component of the PNUTS-PP1 protein phosphatase complex, a protein phosphatase 1 (PP1) complex that promotes RNA polymerase II transcription pause-release, allowing transcription elongation. Promoter-proximal pausing by RNA polymerase II is a transcription halt following transcription initiation but prior to elongation, which acts as a checkpoint to control that transcripts are favorably configured for transcriptional elongation. The PNUTS-PP1 complex mediates the release of RNA polymerase II from promoter-proximal region of genes by catalyzing dephosphorylation of proteins involved in transcription, such as AFF4, CDK9, MEPCE, INTS12, NCBP1, POLR2M/GDOWN1 and SUPT6H. The PNUTS-PP1 complex also regulates RNA polymerase II transcription termination by mediating dephosphorylation of SUPT5H in termination zones downstream of poly(A) sites, thereby promoting deceleration of RNA polymerase II transcription. PNUTS-PP1 complex is also involved in the response to replication stress by mediating dephosphorylation of POLR2A at 'Ser-5' of the CTD, promoting RNA polymerase II degradation. The PNUTS-PP1 complex also plays a role in the control of chromatin structure and cell cycle progression during the transition from mitosis into interphase. PNUTS-PP1 complex mediates dephosphorylation of MYC, promoting MYC stability by preventing MYC ubiquitination by the SCF(FBXW7) complex. In addition to acts as a substrate-recognition component, PPP1R10/PNUTS also acts as a nuclear targeting subunit for the PNUTS-PP1 complex. In some context, PPP1R10/PNUTS also acts as an inhibitor of protein phosphatase 1 (PP1) activity by preventing access to substrates. This Rattus norvegicus (Rat) protein is Serine/threonine-protein phosphatase 1 regulatory subunit 10.